Here is a 368-residue protein sequence, read N- to C-terminus: Methionine import ATP-binding protein MetN (368 aa).

Residues 5–260 (IELNNLSVQF…PKEALTKQFI (256 aa)) enclose the ABC transporter domain. 41-48 (GYSGAGKS) is a binding site for ATP.

Belongs to the ABC transporter superfamily. Methionine importer (TC 3.A.1.24) family. The complex is composed of two ATP-binding proteins (MetN), two transmembrane proteins (MetI) and a solute-binding protein (MetQ).

The protein localises to the cell membrane. It carries out the reaction L-methionine(out) + ATP + H2O = L-methionine(in) + ADP + phosphate + H(+). It catalyses the reaction D-methionine(out) + ATP + H2O = D-methionine(in) + ADP + phosphate + H(+). Functionally, part of the ABC transporter complex MetNIQ involved in methionine import. Responsible for energy coupling to the transport system. The sequence is that of Methionine import ATP-binding protein MetN from Lactococcus lactis subsp. lactis (strain IL1403) (Streptococcus lactis).